Consider the following 332-residue polypeptide: Methylthioribose-1-phosphate isomerase (332 aa).

Residues arginine 44–alanine 46, arginine 87, and glutamine 192 contribute to the substrate site. Aspartate 233 (proton donor) is an active-site residue. Asparagine 243–lysine 244 is a binding site for substrate.

Belongs to the eIF-2B alpha/beta/delta subunits family. MtnA subfamily.

It catalyses the reaction 5-(methylsulfanyl)-alpha-D-ribose 1-phosphate = 5-(methylsulfanyl)-D-ribulose 1-phosphate. The protein operates within amino-acid biosynthesis; L-methionine biosynthesis via salvage pathway; L-methionine from S-methyl-5-thio-alpha-D-ribose 1-phosphate: step 1/6. Catalyzes the interconversion of methylthioribose-1-phosphate (MTR-1-P) into methylthioribulose-1-phosphate (MTRu-1-P). In Dehalococcoides mccartyi (strain CBDB1), this protein is Methylthioribose-1-phosphate isomerase.